An 89-amino-acid polypeptide reads, in one-letter code: Small ribosomal subunit protein uS15 (89 aa).

The protein belongs to the universal ribosomal protein uS15 family. Part of the 30S ribosomal subunit. Forms a bridge to the 50S subunit in the 70S ribosome, contacting the 23S rRNA.

In terms of biological role, one of the primary rRNA binding proteins, it binds directly to 16S rRNA where it helps nucleate assembly of the platform of the 30S subunit by binding and bridging several RNA helices of the 16S rRNA. Functionally, forms an intersubunit bridge (bridge B4) with the 23S rRNA of the 50S subunit in the ribosome. The protein is Small ribosomal subunit protein uS15 of Klebsiella pneumoniae subsp. pneumoniae (strain ATCC 700721 / MGH 78578).